Consider the following 1234-residue polypeptide: DNA-directed RNA polymerase subunit beta (1234 aa).

The segment at 1187 to 1234 is disordered; that stretch reads GREDAPPEEVYEEEYEEEPEELPEDIDFEPDNFDIDSEDLFMDDDYDG. The span at 1192-1234 shows a compositional bias: acidic residues; the sequence is PPEEVYEEEYEEEPEELPEDIDFEPDNFDIDSEDLFMDDDYDG.

Belongs to the RNA polymerase beta chain family. The RNAP catalytic core consists of 2 alpha, 1 beta, 1 beta' and 1 omega subunit. When a sigma factor is associated with the core the holoenzyme is formed, which can initiate transcription.

The catalysed reaction is RNA(n) + a ribonucleoside 5'-triphosphate = RNA(n+1) + diphosphate. DNA-dependent RNA polymerase catalyzes the transcription of DNA into RNA using the four ribonucleoside triphosphates as substrates. The sequence is that of DNA-directed RNA polymerase subunit beta from Caldanaerobacter subterraneus subsp. tengcongensis (strain DSM 15242 / JCM 11007 / NBRC 100824 / MB4) (Thermoanaerobacter tengcongensis).